Here is a 351-residue protein sequence, read N- to C-terminus: GDSL esterase/lipase At3g14820 (351 aa).

Positions 1–22 (MDLHLIGFLLWFFVVQVTTSSA) are cleaved as a signal peptide. N-linked (GlcNAc...) asparagine glycosylation occurs at Asn25. The active-site Nucleophile is Ser39. Residues Asp325 and His328 contribute to the active site.

Belongs to the 'GDSL' lipolytic enzyme family.

The protein resides in the secreted. This is GDSL esterase/lipase At3g14820 from Arabidopsis thaliana (Mouse-ear cress).